The following is a 427-amino-acid chain: C4-dicarboxylate TRAP transporter large permease protein DctM (427 aa).

13 helical membrane passes run 2–22, 55–75, 91–111, 115–135, 138–158, 171–191, 216–236, 237–257, 274–294, 310–330, 335–355, 359–379, and 396–416; these read TILFLFLLLFLLMFIGVPIAV, TLLAIPFFLLSGAFMTTGGVA, GGLAIAAVLACMLFAALSGSS, VAAVGSIAIAGMVRSGYPQAF, GIVCNAGTLGILIPPSIVMVV, FIAGVVPGLLLGLILMVVIYI, ALWGLLLMVIILGGIYSGAFT, PTEAAAVAAVYSAFVALFVYR, LTIMLMFIIANAMLFAHVLTT, LSPWMFLLVVNIVLLIAGNFM, IILILAPIFFPIAMELGIDPI, IIMVVNMEIGLITPPVGLNLF, and ALPWLMILLVFLIIVTYIPAV.

The protein belongs to the TRAP transporter large permease family. The complex comprises the extracytoplasmic solute receptor protein DctP, and the two transmembrane proteins DctQ and DctM.

Its subcellular location is the cell inner membrane. Its function is as follows. Part of the tripartite ATP-independent periplasmic (TRAP) transport system DctPQM involved in C4-dicarboxylates uptake. The protein is C4-dicarboxylate TRAP transporter large permease protein DctM of Pseudomonas aeruginosa (strain ATCC 15692 / DSM 22644 / CIP 104116 / JCM 14847 / LMG 12228 / 1C / PRS 101 / PAO1).